The following is a 118-amino-acid chain: DNA-binding protein MmarC6_0793 (118 aa).

A compositionally biased stretch (basic and acidic residues) spans 1–12 (MNPEEIRQRRLQ). Positions 1–33 (MNPEEIRQRRLQEMQAKAQEQGAQDPEAQRQMQ) are disordered. The segment covering 24–33 (QDPEAQRQMQ) has biased composition (low complexity).

It belongs to the PDCD5 family.

This chain is DNA-binding protein MmarC6_0793, found in Methanococcus maripaludis (strain C6 / ATCC BAA-1332).